Consider the following 146-residue polypeptide: Large ribosomal subunit protein uL15 (146 aa).

The segment covering 1-13 (MKLNELKPNEGSR) has biased composition (basic and acidic residues). The tract at residues 1-54 (MKLNELKPNEGSRRNRKRVGRGTSSGYGKTAGRGQKGQLARTGGKTRLGFEGGQ) is disordered. Gly residues predominate over residues 23–35 (TSSGYGKTAGRGQ).

Belongs to the universal ribosomal protein uL15 family. Part of the 50S ribosomal subunit.

Binds to the 23S rRNA. This chain is Large ribosomal subunit protein uL15, found in Lactobacillus johnsonii (strain CNCM I-12250 / La1 / NCC 533).